The chain runs to 332 residues: UBA domain-containing protein Mud1 (332 aa).

Aspartate 127 is a catalytic residue. The segment at 246 to 298 is disordered; that stretch reads GLGIEPASKASASSPNPQSGTRLGTKESVAPNNEGSSNPPSLVNPPTDPGLNS. Positions 251–264 are enriched in low complexity; the sequence is PASKASASSPNPQS. The span at 275–286 shows a compositional bias: polar residues; the sequence is APNNEGSSNPPS. In terms of domain architecture, UBA spans 291 to 332; that stretch reads PTDPGLNSKIAQLVSMGFDPLEAAQALDAANGDLDVAASFLL.

It belongs to the DDI1 family. Homodimer. Interacts (via UBA domain) with polyubiquitin (polyUb) chains (via Lys-48-linked polyUbs). Has weak binding affinity for monoubiquitin. According to another report, has no affinity for monoubiquitin.

The protein localises to the cytoplasm. It localises to the cell membrane. Functionally, recognizes and binds polyubiquitin chains. Acts as a linker between the 19S proteasome and polyubiquitinated proteins via UBA domain interactions with ubiquitin for their subsequent degradation. Aspartic protease. Appears to act as negative regulator of constitutive exocytosis. May act at the level of secretory vesicle docking and fusion as a competitive inhibitor of SNARE assembly. Required for S-phase checkpoint control. This is UBA domain-containing protein Mud1 from Schizosaccharomyces pombe (strain 972 / ATCC 24843) (Fission yeast).